The chain runs to 264 residues: Thymidylate synthase (264 aa).

DUMP-binding positions include arginine 21 and 126–127; that span reads RR. Cysteine 146 acts as the Nucleophile in catalysis. DUMP-binding positions include 166–169, asparagine 177, and 207–209; these read RSAD and HLY. Residue aspartate 169 participates in (6R)-5,10-methylene-5,6,7,8-tetrahydrofolate binding. A (6R)-5,10-methylene-5,6,7,8-tetrahydrofolate-binding site is contributed by alanine 263.

It belongs to the thymidylate synthase family. Bacterial-type ThyA subfamily. Homodimer.

It is found in the cytoplasm. The catalysed reaction is dUMP + (6R)-5,10-methylene-5,6,7,8-tetrahydrofolate = 7,8-dihydrofolate + dTMP. It functions in the pathway pyrimidine metabolism; dTTP biosynthesis. Functionally, catalyzes the reductive methylation of 2'-deoxyuridine-5'-monophosphate (dUMP) to 2'-deoxythymidine-5'-monophosphate (dTMP) while utilizing 5,10-methylenetetrahydrofolate (mTHF) as the methyl donor and reductant in the reaction, yielding dihydrofolate (DHF) as a by-product. This enzymatic reaction provides an intracellular de novo source of dTMP, an essential precursor for DNA biosynthesis. This is Thymidylate synthase from Nitrobacter hamburgensis (strain DSM 10229 / NCIMB 13809 / X14).